A 264-amino-acid polypeptide reads, in one-letter code: CD320 antigen (264 aa).

A signal peptide spans 1 to 28 (MARCGAGRAAALGLVLRLLLGLRTGPEA). Positions 50-87 (SCPTDTFKCLTSGYCVPLSWRCDGDRDCSDGSDEEECR) constitute an LDL-receptor class A 1 domain. Intrachain disulfides connect Cys51–Cys64, Cys58–Cys77, and Cys71–Cys86. Ca(2+) contacts are provided by Trp69, Asp72, Asp74, Asp76, Asp82, and Glu83. N-linked (GlcNAc...) asparagine glycosylation is present at Asn122. One can recognise an LDL-receptor class A 2 domain in the interval 127-164 (PCQEGELRCILDDVCIPHTWRCDGHPDCPDSSDELSCD). Cystine bridges form between Cys128–Cys141, Cys135–Cys154, and Cys148–Cys163. Ca(2+)-binding residues include Trp146, Asp149, His151, Asp153, Asp159, and Glu160. N-linked (GlcNAc...) asparagine glycosylation is present at Asn195. The chain crosses the membrane as a helical span at residues 213 to 233 (VIAAAGVLSAILVSATILILL).

As to quaternary structure, interacts (via LDL-receptor class A domains) with TCN2.

It is found in the cell membrane. Functionally, receptor for transcobalamin saturated with cobalamin (TCbl). Plays an important role in cobalamin uptake. Plasma membrane protein that is expressed on follicular dendritic cells (FDC) and mediates interaction with germinal center B cells. Functions as a costimulator to promote B cell responses to antigenic stimuli; promotes B cell differentiation and proliferation. Germinal center-B (GC-B) cells differentiate into memory B-cells and plasma cells (PC) through interaction with T-cells and follicular dendritic cells (FDC). CD320 augments the proliferation of PC precursors generated by IL-10. In Rattus norvegicus (Rat), this protein is CD320 antigen (Cd320).